The sequence spans 162 residues: Caveolin-2 (162 aa).

At 1–86 (MGLESEKADV…FEISKYVLYK (86 aa)) the chain is on the cytoplasmic side. Position 19 is a phosphotyrosine (Tyr-19). Residues Ser-20, Ser-23, and Ser-36 each carry the phosphoserine modification. An intramembrane region (helical) is located at residues 87–107 (FLTFFLAIPLAFAAGILFAIL). Residues 108-162 (SCLHIWIIMPFVKTCLMVLPSVQTIWKSVTDVVIAPLCTSVGRSFSSVSLQLSQD) lie on the Cytoplasmic side of the membrane.

Belongs to the caveolin family. Monomer or homodimer. Interacts with CAV1; the interaction forms a stable heterooligomeric complex that is required for targeting to lipid rafts and for caveolae formation. Tyrosine phosphorylated forms do not form heterooligomers with the Tyr-19-phosphorylated form existing as a monomer or dimer. Interacts (tyrosine phosphorylated form) with the SH2 domain-containing proteins, RASA1, NCK1 and SRC. Interacts (tyrosine phosphorylated form) with INSR. Interacts (Tyr-19 phosphorylated form) with MAPK1 (phosphorylated form); the interaction, promoted by insulin, leads to nuclear location and MAPK1 activation. Interacts with STAT3; the interaction is increased on insulin-induced tyrosine phosphorylation leading to STAT activation. Post-translationally, phosphorylated on serine and tyrosine residues. CAV1 promotes phosphorylation on Ser-23 which then targets the complex to the plasma membrane, lipid rafts and caveolae. Phosphorylation on Ser-36 appears to modulate mitosis in endothelial cells. Phosphorylation on Tyr-19 is required for insulin-induced phosphorylation of MAPK1 and DNA binding of STAT3. Tyrosine phosphorylation is induced by both EGF and insulin.

The protein localises to the nucleus. The protein resides in the golgi apparatus membrane. It localises to the cell membrane. Its subcellular location is the membrane. It is found in the caveola. Its function is as follows. May act as a scaffolding protein within caveolar membranes. Interacts directly with G-protein alpha subunits and can functionally regulate their activity. Acts as an accessory protein in conjunction with CAV1 in targeting to lipid rafts and driving caveolae formation. The Ser-36 phosphorylated form has a role in modulating mitosis in endothelial cells. Positive regulator of cellular mitogenesis of the MAPK signaling pathway. Required for the insulin-stimulated nuclear translocation and activation of MAPK1 and STAT3, and the subsequent regulation of cell cycle progression. This is Caveolin-2 (CAV2) from Echinops telfairi (Lesser hedgehog tenrec).